The sequence spans 136 residues: Histone H3.2 (136 aa).

A disordered region spans residues M1 to R43. K5 carries the N6-methylated lysine modification. At K10 the chain carries N6-acetyllysine; alternate. K10 carries the N6-methylated lysine; alternate modification. S11 is subject to Phosphoserine. T12 carries the post-translational modification Phosphothreonine. K15 carries the post-translational modification N6-acetyllysine. Residues K19 and K24 each carry the N6-acetyllysine; alternate modification. N6-methylated lysine; alternate occurs at positions 19 and 24. An N6-methylated lysine modification is found at K28. S29 carries the post-translational modification Phosphoserine. K37 carries the post-translational modification N6-methylated lysine.

It belongs to the histone H3 family. The nucleosome is a histone octamer containing two molecules each of H2A, H2B, H3 and H4 assembled in one H3-H4 heterotetramer and two H2A-H2B heterodimers. The octamer wraps approximately 147 bp of DNA. In terms of processing, acetylation is generally linked to gene activation. Can be acetylated to form H3K9ac, H3K14ac, H3K18ac and H3K23ac. H3K9ac could compete with H3K9me and prevent gene silencing. H3K9ac is restricted to euchromatin. Methylated to form mainly H3K4me, H3K9me, H3K18me, H3K23me, H3K27me and H3K36me. H3K4me1/2/3, H3K9me3, H3K27me3 and H3K36me1/2/3 are typical marks for euchromatin, whereas heterochromatic chromocenters are enriched in H3K9me1/2 and H3K27me1/2. H2BK143ub1 is probably prerequisite for H3K4me. Post-translationally, can be phosphorylated to form H3S10ph, H3T11ph and H3S28ph. As to expression, expressed in bicellular pollen, root tips, shoot apices, young leaves and ovules.

It is found in the nucleus. The protein resides in the nucleolus. The protein localises to the chromosome. Its function is as follows. Core component of nucleosome. Nucleosomes wrap and compact DNA into chromatin, limiting DNA accessibility to the cellular machineries which require DNA as a template. Histones thereby play a central role in transcription regulation, DNA repair, DNA replication and chromosomal stability. DNA accessibility is regulated via a complex set of post-translational modifications of histones, also called histone code, and nucleosome remodeling. This chain is Histone H3.2 (YAH3), found in Lilium longiflorum (Trumpet lily).